The following is a 496-amino-acid chain: MSAKFEISFSKSAKLNSGLAILLKTAEADAAAGAETADPAGVIAKAAKIARFSGKSMAALDIVAPEGAPVERIVVLGLGKAAELTAHDWLKAGGAAASKIKNTDRAAVFLDVPGLTTDARAAADFALGMLLRAYSFDSYKTKKNDDEEKPAKSVKVTIVTADASGAKKAFSDSEAIAGGVNLARDLVNEPPNALGPVEFAARAKELETLGVEVEILTEKEMRRLGMGALLGVAQGSVRPPRLAVMQWKGGRAKDRPIAFIGKGVVFDTGGISIKPAAGMEDMKGDMGGAAAVTGLMHVLASRKAAVNAIGIIGLVENMPDGNAQRPGDIVTSMSGQTIEVINTDAEGRLVLCDALWYCNDRFKPQFMINLATLTGAIVVALGNVHAGLFSNDDQLSARLTAAGLSTNEKLWRMPLGKDYDKLIDSKFADMKNTGGRQAGSITAAHFLKRFVQDTPWAHLDIAGTAMGSPQDEINQSWGSGFGVRLLDELVRAHYEA.

Mn(2+) is bound by residues K262 and D267. K274 is a catalytic residue. Mn(2+) is bound by residues D285, D344, and E346. R348 is an active-site residue.

The protein belongs to the peptidase M17 family. Mn(2+) is required as a cofactor.

Its subcellular location is the cytoplasm. The enzyme catalyses Release of an N-terminal amino acid, Xaa-|-Yaa-, in which Xaa is preferably Leu, but may be other amino acids including Pro although not Arg or Lys, and Yaa may be Pro. Amino acid amides and methyl esters are also readily hydrolyzed, but rates on arylamides are exceedingly low.. It carries out the reaction Release of an N-terminal amino acid, preferentially leucine, but not glutamic or aspartic acids.. Presumably involved in the processing and regular turnover of intracellular proteins. Catalyzes the removal of unsubstituted N-terminal amino acids from various peptides. The sequence is that of Probable cytosol aminopeptidase from Rhizobium etli (strain CIAT 652).